We begin with the raw amino-acid sequence, 140 residues long: Endoribonuclease YbeY (140 aa).

3 residues coordinate Zn(2+): His100, His104, and His110.

The protein belongs to the endoribonuclease YbeY family. Zn(2+) is required as a cofactor.

Its subcellular location is the cytoplasm. Its function is as follows. Single strand-specific metallo-endoribonuclease involved in late-stage 70S ribosome quality control and in maturation of the 3' terminus of the 16S rRNA. This Helicobacter pylori (strain P12) protein is Endoribonuclease YbeY.